The chain runs to 154 residues: 6,7-dimethyl-8-ribityllumazine synthase (154 aa).

Residues Phe23, 57 to 59 (AFE), and 81 to 83 (AVI) each bind 5-amino-6-(D-ribitylamino)uracil. 86 to 87 (ST) is a (2S)-2-hydroxy-3-oxobutyl phosphate binding site. The Proton donor role is filled by His89. Phe114 lines the 5-amino-6-(D-ribitylamino)uracil pocket. Arg128 contributes to the (2S)-2-hydroxy-3-oxobutyl phosphate binding site.

This sequence belongs to the DMRL synthase family.

It carries out the reaction (2S)-2-hydroxy-3-oxobutyl phosphate + 5-amino-6-(D-ribitylamino)uracil = 6,7-dimethyl-8-(1-D-ribityl)lumazine + phosphate + 2 H2O + H(+). It functions in the pathway cofactor biosynthesis; riboflavin biosynthesis; riboflavin from 2-hydroxy-3-oxobutyl phosphate and 5-amino-6-(D-ribitylamino)uracil: step 1/2. In terms of biological role, catalyzes the formation of 6,7-dimethyl-8-ribityllumazine by condensation of 5-amino-6-(D-ribitylamino)uracil with 3,4-dihydroxy-2-butanone 4-phosphate. This is the penultimate step in the biosynthesis of riboflavin. In Campylobacter jejuni subsp. jejuni serotype O:2 (strain ATCC 700819 / NCTC 11168), this protein is 6,7-dimethyl-8-ribityllumazine synthase.